The following is a 111-amino-acid chain: Large ribosomal subunit protein uL23 (111 aa).

This sequence belongs to the universal ribosomal protein uL23 family. As to quaternary structure, part of the 50S ribosomal subunit. Contacts protein L29, and trigger factor when it is bound to the ribosome.

Functionally, one of the early assembly proteins it binds 23S rRNA. One of the proteins that surrounds the polypeptide exit tunnel on the outside of the ribosome. Forms the main docking site for trigger factor binding to the ribosome. This Nitrosospira multiformis (strain ATCC 25196 / NCIMB 11849 / C 71) protein is Large ribosomal subunit protein uL23.